We begin with the raw amino-acid sequence, 212 residues long: Ribonuclease HII (212 aa).

The 190-residue stretch at 17 to 206 (RVIAGVDEAG…KSTKPQSLQT (190 aa)) folds into the RNase H type-2 domain. 3 residues coordinate a divalent metal cation: D23, E24, and D115.

This sequence belongs to the RNase HII family. Mn(2+) is required as a cofactor. It depends on Mg(2+) as a cofactor.

It localises to the cytoplasm. It catalyses the reaction Endonucleolytic cleavage to 5'-phosphomonoester.. In terms of biological role, endonuclease that specifically degrades the RNA of RNA-DNA hybrids. This is Ribonuclease HII from Syntrophus aciditrophicus (strain SB).